Consider the following 156-residue polypeptide: ATP synthase subunit b (156 aa).

Residues 7-27 form a helical membrane-spanning segment; that stretch reads LFAQMVVFLILAWFTMKFVWP.

Belongs to the ATPase B chain family. F-type ATPases have 2 components, F(1) - the catalytic core - and F(0) - the membrane proton channel. F(1) has five subunits: alpha(3), beta(3), gamma(1), delta(1), epsilon(1). F(0) has three main subunits: a(1), b(2) and c(10-14). The alpha and beta chains form an alternating ring which encloses part of the gamma chain. F(1) is attached to F(0) by a central stalk formed by the gamma and epsilon chains, while a peripheral stalk is formed by the delta and b chains.

It is found in the cell inner membrane. Its function is as follows. F(1)F(0) ATP synthase produces ATP from ADP in the presence of a proton or sodium gradient. F-type ATPases consist of two structural domains, F(1) containing the extramembraneous catalytic core and F(0) containing the membrane proton channel, linked together by a central stalk and a peripheral stalk. During catalysis, ATP synthesis in the catalytic domain of F(1) is coupled via a rotary mechanism of the central stalk subunits to proton translocation. In terms of biological role, component of the F(0) channel, it forms part of the peripheral stalk, linking F(1) to F(0). This is ATP synthase subunit b from Paraburkholderia phytofirmans (strain DSM 17436 / LMG 22146 / PsJN) (Burkholderia phytofirmans).